Reading from the N-terminus, the 329-residue chain is BTB/POZ domain-containing protein At1g55760 (329 aa).

Residues 164 to 231 (TDITINASDG…IYGNIQNEDF (68 aa)) form the BTB domain.

It functions in the pathway protein modification; protein ubiquitination. Its function is as follows. May act as a substrate-specific adapter of an E3 ubiquitin-protein ligase complex (CUL3-RBX1-BTB) which mediates the ubiquitination and subsequent proteasomal degradation of target proteins. In Arabidopsis thaliana (Mouse-ear cress), this protein is BTB/POZ domain-containing protein At1g55760.